The primary structure comprises 142 residues: Hemoglobin subunit alpha (142 aa).

The Globin domain occupies 2-142 (VLSPADKSNV…VSTVLTSKYR (141 aa)). At Ser-4 the chain carries Phosphoserine. 2 positions are modified to N6-succinyllysine: Lys-8 and Lys-12. At Lys-17 the chain carries N6-acetyllysine; alternate. Lys-17 carries the N6-succinyllysine; alternate modification. Position 25 is a phosphotyrosine (Tyr-25). Ser-36 carries the post-translational modification Phosphoserine. The residue at position 41 (Lys-41) is an N6-succinyllysine. A Phosphoserine modification is found at Ser-50. His-59 is a binding site for O2. His-88 is a binding site for heme b. Ser-103 is subject to Phosphoserine. Thr-109 carries the post-translational modification Phosphothreonine. Position 125 is a phosphoserine (Ser-125). Residues Thr-135 and Thr-138 each carry the phosphothreonine modification. Position 139 is a phosphoserine (Ser-139).

The protein belongs to the globin family. As to quaternary structure, heterotetramer of two alpha chains and two beta chains. As to expression, red blood cells.

In terms of biological role, involved in oxygen transport from the lung to the various peripheral tissues. Functionally, hemopressin acts as an antagonist peptide of the cannabinoid receptor CNR1. Hemopressin-binding efficiently blocks cannabinoid receptor CNR1 and subsequent signaling. In Ursus maritimus (Polar bear), this protein is Hemoglobin subunit alpha (HBA).